The sequence spans 106 residues: Small ribosomal subunit protein bS20 (106 aa).

Over residues 1-20 the composition is skewed to basic residues; that stretch reads MATAKPKKKNPRLASGRKRV. The tract at residues 1–21 is disordered; sequence MATAKPKKKNPRLASGRKRVR.

Belongs to the bacterial ribosomal protein bS20 family.

Its function is as follows. Binds directly to 16S ribosomal RNA. The protein is Small ribosomal subunit protein bS20 of Polaromonas naphthalenivorans (strain CJ2).